The chain runs to 396 residues: Glycerate kinase (396 aa).

This sequence belongs to the glycerate kinase type-2 family.

The protein resides in the cytoplasm. It carries out the reaction (R)-glycerate + ATP = (2R)-3-phosphoglycerate + ADP + H(+). This chain is Glycerate kinase (GLYCTK), found in Macaca fascicularis (Crab-eating macaque).